A 123-amino-acid polypeptide reads, in one-letter code: Small ribosomal subunit protein uS12 (123 aa).

3-methylthioaspartic acid is present on Asp-89.

This sequence belongs to the universal ribosomal protein uS12 family. Part of the 30S ribosomal subunit. Contacts proteins S8 and S17. May interact with IF1 in the 30S initiation complex.

With S4 and S5 plays an important role in translational accuracy. In terms of biological role, interacts with and stabilizes bases of the 16S rRNA that are involved in tRNA selection in the A site and with the mRNA backbone. Located at the interface of the 30S and 50S subunits, it traverses the body of the 30S subunit contacting proteins on the other side and probably holding the rRNA structure together. The combined cluster of proteins S8, S12 and S17 appears to hold together the shoulder and platform of the 30S subunit. This Caulobacter vibrioides (strain ATCC 19089 / CIP 103742 / CB 15) (Caulobacter crescentus) protein is Small ribosomal subunit protein uS12.